Consider the following 223-residue polypeptide: N-terminal Xaa-Pro-Lys N-methyltransferase 1 (223 aa).

The residue at position 1 (Met1) is an N-acetylmethionine. Position 2 is an N-acetylthreonine; in N-terminal Xaa-Pro-Lys N-methyltransferase 1, N-terminally processed (Thr2). S-adenosyl-L-methionine is bound by residues Gly69, Arg74, 91 to 93, 119 to 120, and Gln135; these read DVT and LQ.

Belongs to the methyltransferase superfamily. NTM1 family.

It is found in the nucleus. It catalyses the reaction N-terminal L-alanyl-L-prolyl-L-lysyl-[protein] + 3 S-adenosyl-L-methionine = N-terminal N,N,N-trimethyl-L-alanyl-L-prolyl-L-lysyl-[protein] + 3 S-adenosyl-L-homocysteine + 3 H(+). The catalysed reaction is N-terminal L-seryl-L-prolyl-L-lysyl-[protein] + 3 S-adenosyl-L-methionine = N-terminal N,N,N-trimethyl-L-seryl-L-prolyl-L-lysyl-[protein] + 3 S-adenosyl-L-homocysteine + 3 H(+). It carries out the reaction N-terminal L-prolyl-L-prolyl-L-lysyl-[protein] + 2 S-adenosyl-L-methionine = N-terminal N,N-dimethyl-L-prolyl-L-prolyl-L-lysyl-[protein] + 2 S-adenosyl-L-homocysteine + 2 H(+). Its function is as follows. Distributive alpha-N-methyltransferase that methylates the N-terminus of target proteins containing the N-terminal motif [Ala/Gly/Pro/Ser]-Pro-Lys when the initiator Met is cleaved. Specifically catalyzes mono-, di- or tri-methylation of the exposed alpha-amino group of the Ala, Gly or Ser residue in the [Ala/Gly/Ser]-Pro-Lys motif and mono- or di-methylation of Pro in the Pro-Pro-Lys motif. Some of the substrates may be primed by NTMT2-mediated monomethylation. Catalyzes the trimethylation of the N-terminal Gly in CENPA (after removal of Met-1). Responsible for the N-terminal methylation of KLHL31, MYL2, MYL3, RB1, RCC1, RPL23A and SET. Required during mitosis for normal bipolar spindle formation and chromosome segregation via its action on RCC1. This is N-terminal Xaa-Pro-Lys N-methyltransferase 1 (Ntmt1) from Rattus norvegicus (Rat).